The primary structure comprises 312 residues: uncharacterized protein (312 aa).

Helical transmembrane passes span 4–24 (IFLA…KVIF), 45–65 (LITP…PLVL), 75–95 (IAGI…AVML), 117–137 (VILA…NLIW), 171–191 (GLGV…IQFL), 217–237 (TSMT…GVMI), 253–275 (AFIF…PLGI), and 280–299 (LLLI…AHTW).

It is found in the cell membrane. This is an uncharacterized protein from Bacillus subtilis (strain 168).